Consider the following 481-residue polypeptide: Mechanosensory protein 2 (481 aa).

Over residues 1–22 (MSATMSSARNSVVSLSSNGSVK) the composition is skewed to low complexity. 2 disordered regions span residues 1–67 (MSAT…MATR) and 80–104 (SANS…GNGK). Positions 27–38 (LVSNERSSSIQQ) are enriched in polar residues. Residues 86–104 (DSVKKEKQAEKDVEKGNGK) are compositionally biased toward basic and acidic residues. Residues 115–135 (GVCGWILTILSYLLIFFTLPI) traverse the membrane as a helical segment. Gly residues predominate over residues 403 to 421 (EGGGGHGHSHGGGGGGLGS). The interval 403–481 (EGGGGHGHSH…SQLDPALLIR (79 aa)) is disordered. Positions 433-447 (SGPSTTTTSGRPLLR) are enriched in low complexity. Positions 463-473 (APNQSQTSVSQ) are enriched in polar residues.

The protein belongs to the band 7/mec-2 family. As to quaternary structure, component of a non-voltage-gated amiloride-sensitive cation channel complex (also called the degenerin channel complex) composed of at least the mec-2, mec-4, mec-6 and mec-10 subunits; the complex mediates mechanotransduction in touch cells. Interacts with mec-6 and mec-4.

It localises to the membrane. In terms of biological role, subunit of an amiloride-sensitive cation channel (degenerin channel complex) permeable for sodium, potassium, lithium and N-methylglucamine, and required for mechanosensory transduction (touch sensitivity). Positively regulates the activity of the putative mechanosensory transduction channel. May link the mechanosensory channel and the microtubule cytoskeleton of the touch receptor neurons. Required for the function of a set of six touch receptor neurons. The sequence is that of Mechanosensory protein 2 from Caenorhabditis elegans.